The primary structure comprises 107 residues: Ig kappa chain V-VI region XRPC 24 (107 aa).

Residues 1–23 (EIVLTQSPAITAASLGQKVTITC) are framework-1. Cysteines 23 and 87 form a disulfide. Residues 24–33 (SASSSVSYMH) are complementarity-determining-1. Positions 34–48 (WYQQKSGTSPKPWIY) are framework-2. Residues 49–55 (EISKLAS) form a complementarity-determining-2 region. Positions 56–87 (GVPARFSGSGSGTSYSLTISSMEAEDAAIYYC) are framework-3. Residues 88 to 96 (QQWNYPLIT) are complementarity-determining-3. The interval 97–106 (FGSGTKLEIK) is framework-4.

The sequence is that of Ig kappa chain V-VI region XRPC 24 from Mus musculus (Mouse).